The sequence spans 1196 residues: Ice nucleation protein (1196 aa).

The interval 172-1147 (ATYGSTLSGD…LSAGEDSTLI (976 aa)) is octapeptide periodicity. Disordered stretches follow at residues 269–304 (GYGS…GYGS), 319–352 (GSTQ…GYGS), and 415–442 (GSTQ…GSNL). Polar residues-rich tracts occupy residues 271-298 (GSTQ…GSNL) and 319-346 (GSTQ…GSNL).

This sequence belongs to the bacterial ice nucleation protein family. Membrane environment or aggregation seems to be required for ice nucleation activity.

Its subcellular location is the cell outer membrane. Its function is as follows. Ice nucleation proteins enable bacteria to nucleate crystallization in supercooled water. This Pseudomonas syringae protein is Ice nucleation protein (inaV).